Consider the following 201-residue polypeptide: FMN-dependent NADH:quinone oxidoreductase (201 aa).

Residue 92–95 coordinates FMN; that stretch reads MWNL.

The protein belongs to the azoreductase type 1 family. Homodimer. The cofactor is FMN.

The enzyme catalyses 2 a quinone + NADH + H(+) = 2 a 1,4-benzosemiquinone + NAD(+). The catalysed reaction is N,N-dimethyl-1,4-phenylenediamine + anthranilate + 2 NAD(+) = 2-(4-dimethylaminophenyl)diazenylbenzoate + 2 NADH + 2 H(+). In terms of biological role, quinone reductase that provides resistance to thiol-specific stress caused by electrophilic quinones. Its function is as follows. Also exhibits azoreductase activity. Catalyzes the reductive cleavage of the azo bond in aromatic azo compounds to the corresponding amines. In Caldicellulosiruptor saccharolyticus (strain ATCC 43494 / DSM 8903 / Tp8T 6331), this protein is FMN-dependent NADH:quinone oxidoreductase.